A 718-amino-acid polypeptide reads, in one-letter code: MCASVKSNIRGPALIPRMKTKHRIYYVTLFSIVLLGLIATGMFQFWPHSIESSSDGGVEKRSIREVPVVRLPTDSPIPERGDLSCRMHTCFDVYRCGFNPKNKIKVYIYPLKKYVDDAGVPVSSAISREYNELLTAISDSDYYTDDINRACLFVPSIDVLNQNPLRIKETAQALAQLSRWDRGTNHLLFNMLPGAPPDYNTALDVPRDRALLAGGGFSTWTYRQGYDVSIPVFSPLSAEMALPEKAPGPRRYFLLSSQMAIHPEYREELEALQAKHQESVLVLDKCTNLSEGVLSVRKRCHQHQVFDYPQVLQEATFCTVLRGARLGQAVLSDVLQAGCVPVVIADSYILPFSEVLDWKRASVVVPEEKMSDVYSILQNIPQRQIEEMQRQARWFWEAYFQSIKAIALATLQIINDRIYPYAAISYEEWNDPPAVKWASVSNPLFLPLIPPQSQGFTAIVLTYDRVESLFRVITEVSKVPSLSKLLVVWNNQNKNPPEESLWPKIRVPLKVVRTAENKLSNRFFPYDEIETEAVLAIDDDIIMLTSDELQFGYEVWREFPDRLVGYPGRLHLWDHEMNKWKYESEWTNEVSMVLTGAAFYHKYFNYLYTYKMPGDIKNWVDTHMNCEDIAMNFLVANVTGKAVIKVTPRKKFKCPECTAIDGLSLDQTHMVERSECINKFASVFGTMPLKVVEHRADPVLYKDDFPEKLKSFPNIGSL.

Over 1–25 (MCASVKSNIRGPALIPRMKTKHRIY) the chain is Cytoplasmic. The helical; Signal-anchor for type II membrane protein transmembrane segment at 26-46 (YVTLFSIVLLGLIATGMFQFW) threads the bilayer. Over 47–718 (PHSIESSSDG…LKSFPNIGSL (672 aa)) the chain is Lumenal. 4 disulfides stabilise this stretch: C85/C90, C96/C151, C286/C300, and C318/C339. N288 carries N-linked (GlcNAc...) asparagine glycosylation. UDP contacts are provided by L461, R465, N490, and N517. UDP-N-acetyl-alpha-D-glucosamine is bound by residues R465, N490, N517, R522, D538, D539, and D540. The UDP site is built by D538 and D539. Residue D540 coordinates Mn(2+). The a protein site is built by Y582 and S584. C626 and C676 are disulfide-bonded. UDP-N-acetyl-alpha-D-glucosamine-binding residues include E627 and D628. N-linked (GlcNAc...) asparagine glycosylation is present at N637. Residues K651 and K653 each coordinate a protein. R673 serves as a coordination point for UDP-N-acetyl-alpha-D-glucosamine.

It belongs to the glycosyltransferase 47 family. As to quaternary structure, part of the heparan sulfate polymerase, a dimeric complex composed of EXT1 and EXT2. Could also form homooligomeric complexes. Interacts with NDST1. Interacts with GALNT5. Mn(2+) serves as cofactor. In terms of processing, N-glycosylated at Asn-637. Post-translationally, a soluble form is generated by proteolytic processing. As to expression, expressed in heart, brain, spleen, lung, liver, skeletal muscle and testis. Heart shows a high expression.

Its subcellular location is the golgi apparatus membrane. It localises to the golgi apparatus. The protein resides in the cis-Golgi network membrane. It is found in the endoplasmic reticulum membrane. The protein localises to the secreted. It carries out the reaction 3-O-{[(1-&gt;4)-beta-D-GlcA-(1-&gt;4)-alpha-D-GlcNAc](n)-(1-&gt;4)-beta-D-GlcA-(1-&gt;3)-beta-D-Gal-(1-&gt;3)-beta-D-Gal-(1-&gt;4)-beta-D-Xyl}-L-seryl-[protein] + UDP-N-acetyl-alpha-D-glucosamine = 3-O-{alpha-D-GlcNAc-[(1-&gt;4)-beta-D-GlcA-(1-&gt;4)-alpha-D-GlcNAc](n)-(1-&gt;4)-beta-D-GlcA-(1-&gt;3)-beta-D-Gal-(1-&gt;3)-beta-D-Gal-(1-&gt;4)-beta-D-Xyl}-L-seryl-[protein] + UDP + H(+). It participates in protein modification; protein glycosylation. Glycosyltransferase forming with EXT1 the heterodimeric heparan sulfate polymerase which catalyzes the elongation of the heparan sulfate glycan backbone. Glycan backbone extension consists in the alternating transfer of (1-&gt;4)-beta-D-GlcA and (1-&gt;4)-alpha-D-GlcNAc residues from their respective UDP-sugar donors. Both EXT1 and EXT2 are required for the full activity of the polymerase since EXT1 bears the N-acetylglucosaminyl-proteoglycan 4-beta-glucuronosyltransferase activity within the complex while EXT2 carries the glucuronosyl-N-acetylglucosaminyl-proteoglycan 4-alpha-N-acetylglucosaminyltransferase activity. Heparan sulfate proteoglycans are ubiquitous components of the extracellular matrix and play an important role in tissue homeostasis and signaling. This Mus musculus (Mouse) protein is Exostosin-2.